The sequence spans 368 residues: Phosphate acyltransferase (368 aa).

The protein belongs to the PlsX family. As to quaternary structure, homodimer. Probably interacts with PlsY.

It is found in the cytoplasm. The enzyme catalyses a fatty acyl-[ACP] + phosphate = an acyl phosphate + holo-[ACP]. It functions in the pathway lipid metabolism; phospholipid metabolism. In terms of biological role, catalyzes the reversible formation of acyl-phosphate (acyl-PO(4)) from acyl-[acyl-carrier-protein] (acyl-ACP). This enzyme utilizes acyl-ACP as fatty acyl donor, but not acyl-CoA. This chain is Phosphate acyltransferase, found in Cereibacter sphaeroides (strain ATCC 17025 / ATH 2.4.3) (Rhodobacter sphaeroides).